Reading from the N-terminus, the 282-residue chain is Elongation factor Ts (282 aa).

The involved in Mg(2+) ion dislocation from EF-Tu stretch occupies residues 80–83 (TDFV).

Belongs to the EF-Ts family.

It is found in the cytoplasm. In terms of biological role, associates with the EF-Tu.GDP complex and induces the exchange of GDP to GTP. It remains bound to the aminoacyl-tRNA.EF-Tu.GTP complex up to the GTP hydrolysis stage on the ribosome. The protein is Elongation factor Ts of Chlamydia caviae (strain ATCC VR-813 / DSM 19441 / 03DC25 / GPIC) (Chlamydophila caviae).